Reading from the N-terminus, the 154-residue chain is Probable prefoldin subunit 5 (154 aa).

It belongs to the prefoldin subunit alpha family. In terms of assembly, heterohexamer of two PFD-alpha type and four PFD-beta type subunits.

Functionally, binds specifically to cytosolic chaperonin (c-CPN) and transfers target proteins to it. Binds to nascent polypeptide chain and promotes folding in an environment in which there are many competing pathways for nonnative proteins. The polypeptide is Probable prefoldin subunit 5 (Caenorhabditis briggsae).